We begin with the raw amino-acid sequence, 223 residues long: Neurotrophic factor BDNF precursor form (223 aa).

The first 5 residues, 1 to 5, serve as a signal peptide directing secretion; sequence SCMKA. Residues 6 to 114 constitute a propeptide that is removed on maturation; it reads APMKEVSIRG…AANMSMRVRR (109 aa). N-linked (GlcNAc...) asparagine glycosylation occurs at Asn-107. Cystine bridges form between Cys-127–Cys-194 and Cys-172–Cys-223.

The protein belongs to the NGF-beta family.

The protein localises to the secreted. Promotes the survival of neuronal populations that are all located either in the central nervous system or directly connected to it. The polypeptide is Neurotrophic factor BDNF precursor form (BDNF) (Exiliboa placata (Oaxacan dwarf boa)).